We begin with the raw amino-acid sequence, 219 residues long: MSTIQLEAQSRTDMGKGASRRLRRLENKVPAVIYGGSKKPMAIHFSHNKVIKALETESIYSSVFDITVDGKVEHVILKALQRHPYKPIVLHMDLQRVSSKDILVKLVPVHFINEEQSPGIKAGGIVQHTMTQVEIRCQAKDLPEFIEVDMSKVGMDDVVHLSDLKLPKGVQLTVDVTDGSHDAPVVSIHAAKVSSTELEETPEVPASAVPTTDQGESAE.

The interval valine 193–glutamate 219 is disordered. A compositionally biased stretch (polar residues) spans valine 209–glutamate 219.

Belongs to the bacterial ribosomal protein bL25 family. CTC subfamily. In terms of assembly, part of the 50S ribosomal subunit; part of the 5S rRNA/L5/L18/L25 subcomplex. Contacts the 5S rRNA. Binds to the 5S rRNA independently of L5 and L18.

This is one of the proteins that binds to the 5S RNA in the ribosome where it forms part of the central protuberance. The protein is Large ribosomal subunit protein bL25 of Legionella pneumophila (strain Corby).